The sequence spans 478 residues: Trigger factor (478 aa).

Residues 154–167 (MAKDSRSFEPREEG) are compositionally biased toward basic and acidic residues. Disordered regions lie at residues 154–173 (MAKDSRSFEPREEGAEAQSG) and 444–478 (LFAEDDEADAVTGAAATDEKPSESSNEAAADKAAG). Residues 173-258 (GDRVTIDFVG…VKAVAAPGET (86 aa)) form the PPIase FKBP-type domain.

Belongs to the FKBP-type PPIase family. Tig subfamily.

The protein resides in the cytoplasm. It catalyses the reaction [protein]-peptidylproline (omega=180) = [protein]-peptidylproline (omega=0). Involved in protein export. Acts as a chaperone by maintaining the newly synthesized protein in an open conformation. Functions as a peptidyl-prolyl cis-trans isomerase. This is Trigger factor from Methylorubrum populi (strain ATCC BAA-705 / NCIMB 13946 / BJ001) (Methylobacterium populi).